The following is a 229-amino-acid chain: Geodin cluster transcription factor (229 aa).

Residues 12 to 39 (CHACAASKVRCSKEKPTCSRCSKRGTTC) constitute a DNA-binding region (zn(2)-C6 fungal-type). Disordered stretches follow at residues 50–100 (KQLN…PGTT) and 141–169 (TANS…RPPT). 2 stretches are compositionally biased toward polar residues: residues 51 to 71 (QLNN…SLAT) and 153 to 164 (ITSSHNTSSNSP).

It is found in the nucleus. Functionally, transcription factor that regulates the expression of the gene cluster that mediates the biosynthesis of geodin, an intermediate in the biosynthesis of other natural products. In Aspergillus terreus (strain NIH 2624 / FGSC A1156), this protein is Geodin cluster transcription factor.